A 264-amino-acid chain; its full sequence is MEMO1 family protein Mbur_2394 (264 aa).

Belongs to the MEMO1 family.

This Methanococcoides burtonii (strain DSM 6242 / NBRC 107633 / OCM 468 / ACE-M) protein is MEMO1 family protein Mbur_2394.